A 119-amino-acid polypeptide reads, in one-letter code: Na(+)/H(+) antiporter subunit G (119 aa).

The next 3 membrane-spanning stretches (helical) occupy residues 7–29 (IISI…IIRF), 44–61 (TLGV…FFLV), and 66–88 (VGKL…MMMG).

It belongs to the CPA3 antiporters (TC 2.A.63) subunit G family. Forms a heterooligomeric complex that consists of seven subunits: MrpA, MrpB, MrpC, MrpD, MrpE, MrpF and MrpG.

It is found in the cell membrane. Mnh complex is a Na(+)Li(+)/H(+) antiporter involved in Na(+) and/or Li(+) excretion and Na(+) resistance. Na(+)/H(+) antiport consumes a transmembrane electrical potential, and is thus inferred to be electrogenic. Does not transport K(+), Ca(2+) or Mg(2+). This is Na(+)/H(+) antiporter subunit G (mrpG) from Alkalihalophilus pseudofirmus (strain ATCC BAA-2126 / JCM 17055 / OF4) (Bacillus pseudofirmus).